The following is a 639-amino-acid chain: DNA gyrase subunit B (639 aa).

Basic and acidic residues predominate over residues 392–402 (QAEELTRRKSA). Residues 392–417 (QAEELTRRKSALESTSLPGKLADCQS) are disordered. Residues 423 to 537 (SELFIVEGDS…AGYVYAAQPP (115 aa)) form the Toprim domain. Mg(2+)-binding residues include Glu-429, Asp-502, and Asp-504.

This sequence belongs to the type II topoisomerase GyrB family. In terms of assembly, heterotetramer, composed of two GyrA and two GyrB chains. In the heterotetramer, GyrA contains the active site tyrosine that forms a transient covalent intermediate with DNA, while GyrB binds cofactors and catalyzes ATP hydrolysis. Mg(2+) is required as a cofactor. Requires Mn(2+) as cofactor. The cofactor is Ca(2+).

It localises to the cytoplasm. It catalyses the reaction ATP-dependent breakage, passage and rejoining of double-stranded DNA.. Its function is as follows. A type II topoisomerase that negatively supercoils closed circular double-stranded (ds) DNA in an ATP-dependent manner to modulate DNA topology and maintain chromosomes in an underwound state. Negative supercoiling favors strand separation, and DNA replication, transcription, recombination and repair, all of which involve strand separation. Also able to catalyze the interconversion of other topological isomers of dsDNA rings, including catenanes and knotted rings. Type II topoisomerases break and join 2 DNA strands simultaneously in an ATP-dependent manner. The sequence is that of DNA gyrase subunit B from Haloferax lucentense (strain DSM 14919 / JCM 9276 / NCIMB 13854 / Aa 2.2) (Haloferax alicantei).